Reading from the N-terminus, the 122-residue chain is Large ribosomal subunit protein uL14 (122 aa).

Belongs to the universal ribosomal protein uL14 family. As to quaternary structure, part of the 50S ribosomal subunit. Forms a cluster with proteins L3 and L19. In the 70S ribosome, L14 and L19 interact and together make contacts with the 16S rRNA in bridges B5 and B8.

In terms of biological role, binds to 23S rRNA. Forms part of two intersubunit bridges in the 70S ribosome. This chain is Large ribosomal subunit protein uL14, found in Bdellovibrio bacteriovorus (strain ATCC 15356 / DSM 50701 / NCIMB 9529 / HD100).